We begin with the raw amino-acid sequence, 198 residues long: NADH-quinone oxidoreductase subunit B (198 aa).

Polar residues predominate over residues 1–20 (MGLNPTQVSTSGSPQVSQPA). A disordered region spans residues 1 to 29 (MGLNPTQVSTSGSPQVSQPATGVLDPRTG). [4Fe-4S] cluster is bound by residues Cys-77, Cys-78, Cys-142, and Cys-172.

It belongs to the complex I 20 kDa subunit family. As to quaternary structure, NDH-1 is composed of 14 different subunits. Subunits NuoB, C, D, E, F, and G constitute the peripheral sector of the complex. [4Fe-4S] cluster is required as a cofactor.

The protein localises to the cell inner membrane. The enzyme catalyses a quinone + NADH + 5 H(+)(in) = a quinol + NAD(+) + 4 H(+)(out). NDH-1 shuttles electrons from NADH, via FMN and iron-sulfur (Fe-S) centers, to quinones in the respiratory chain. The immediate electron acceptor for the enzyme in this species is believed to be ubiquinone. Couples the redox reaction to proton translocation (for every two electrons transferred, four hydrogen ions are translocated across the cytoplasmic membrane), and thus conserves the redox energy in a proton gradient. The chain is NADH-quinone oxidoreductase subunit B from Afipia carboxidovorans (strain ATCC 49405 / DSM 1227 / KCTC 32145 / OM5) (Oligotropha carboxidovorans).